Reading from the N-terminus, the 338-residue chain is High mobility group B protein 9 (338 aa).

In terms of domain architecture, ARID spans 38-129 (VKDSSVFWDT…LLFHYEQVHL (92 aa)). Residues 233 to 259 (TGRRRRRLGKRRRSRRREDPNYPKPNR) are disordered. Residues 235–247 (RRRRRLGKRRRSR) are compositionally biased toward basic residues. Positions 255-322 (PKPNRSGYNF…RYQRELNEYR (68 aa)) form a DNA-binding region, HMG box.

As to expression, predominantly expressed in leaves, flowers and seedlings.

It localises to the nucleus. Binds preferentially DNA with A/T-rich content. Required for karyogamy during female gametophyte development, when the two polar nuclei fuse to form the diploid central cell nucleus. The polypeptide is High mobility group B protein 9 (HMGB9) (Arabidopsis thaliana (Mouse-ear cress)).